The sequence spans 302 residues: Tegument protein VP22 (302 aa).

The segment covering 1-10 has biased composition (basic and acidic residues); it reads MASSDGDRLC. Disordered stretches follow at residues 1–42 and 125–167; these read MASS…PDDS and SFTK…TATS. The interaction with gE stretch occupies residues 154–244; it reads RPISFSTAPK…ANEADLGEGA (91 aa). The segment covering 157 to 167 has biased composition (polar residues); it reads SFSTAPKTATS. A Nuclear export signal motif is present at residues 212–224; sequence LDRLLTGAVIRIT. The disordered stretch occupies residues 243-302; that stretch reads GASVSKRGHNRKTGDLQGGMGNEPMYAQVRKPKSRTDTQTTGRITNRSRARSASRTDARK.

Belongs to the alphaherpesvirinae VP22 tegument protein family. As to quaternary structure, interacts with gE (via C-terminus); this interaction is necessary for the recruitment of VP22/ORF9 to the Golgi and its packaging into virions. Interacts with gM (via C-terminus). Interacts with VP16/ORF10; this interaction allows the formation of a tripartite complex composed of VP16/ORF10, VP22/ORF9 and VHS/ORF17. Interacts with the capsid-binding protein ORF44. Interacts with host CGAS. In terms of processing, highly phosphorylated in the host cell. Packaging is selective for underphosphorylated forms.

The protein resides in the virion tegument. The protein localises to the host cytoplasm. It localises to the host nucleus. It is found in the host Golgi apparatus. Tegument protein that plays different roles during the time course of infection. Participates in both the accumulation of viral mRNAs and viral protein translation at late time of infection. Modulates the RNase activity of the virion host shutoff protein ORF17 probably to ensure necessary levels of key cellular mRNAs and proteins. Plays a role in microtubule reorganization that occurs after viral infection by stabilizing microtubule network. Plays a role in the inhibition of host innate immune system by targeting the CGAS enzymatic activity which is the principal cytosolic DNA sensor that detects invading viral DNA. Acts by mediating disruption of liquid-like droplets in which CGAS is activated, thereby preventing CGAS activity. This Varicella-zoster virus (strain Oka vaccine) (HHV-3) protein is Tegument protein VP22.